The primary structure comprises 447 residues: Ribulose bisphosphate carboxylase large chain (447 aa).

The residue at position 5 (Lys5) is an N6,N6,N6-trimethyllysine. Positions 114 and 164 each coordinate substrate. The active-site Proton acceptor is Lys166. Lys168 lines the substrate pocket. Mg(2+)-binding residues include Lys192, Asp194, and Glu195. N6-carboxylysine is present on Lys192. The active-site Proton acceptor is His285. Arg286, His318, and Ser370 together coordinate substrate.

The protein belongs to the RuBisCO large chain family. Type I subfamily. As to quaternary structure, heterohexadecamer of 8 large chains and 8 small chains; disulfide-linked. The disulfide link is formed within the large subunit homodimers. Mg(2+) serves as cofactor. The disulfide bond which can form in the large chain dimeric partners within the hexadecamer appears to be associated with oxidative stress and protein turnover.

The protein localises to the plastid. The protein resides in the chloroplast. It carries out the reaction 2 (2R)-3-phosphoglycerate + 2 H(+) = D-ribulose 1,5-bisphosphate + CO2 + H2O. The enzyme catalyses D-ribulose 1,5-bisphosphate + O2 = 2-phosphoglycolate + (2R)-3-phosphoglycerate + 2 H(+). In terms of biological role, ruBisCO catalyzes two reactions: the carboxylation of D-ribulose 1,5-bisphosphate, the primary event in carbon dioxide fixation, as well as the oxidative fragmentation of the pentose substrate in the photorespiration process. Both reactions occur simultaneously and in competition at the same active site. This chain is Ribulose bisphosphate carboxylase large chain, found in Camassia leichtlinii (Western quamash).